A 78-amino-acid polypeptide reads, in one-letter code: MLVLTRKMGETITIGDQIRIKVVEMKGNQVRLGIEAPGDMRIYREEIYLKVQKENQLAAAWSLEDLESAVNFAGAGKE.

The protein belongs to the CsrA/RsmA family. As to quaternary structure, homodimer; the beta-strands of each monomer intercalate to form a hydrophobic core, while the alpha-helices form wings that extend away from the core.

The protein localises to the cytoplasm. Its function is as follows. A translational regulator that binds mRNA to regulate translation initiation and/or mRNA stability. Usually binds in the 5'-UTR at or near the Shine-Dalgarno sequence preventing ribosome-binding, thus repressing translation. Its main target seems to be the major flagellin gene, while its function is anatagonized by FliW. This is Translational regulator CsrA from Geobacter metallireducens (strain ATCC 53774 / DSM 7210 / GS-15).